Here is a 272-residue protein sequence, read N- to C-terminus: Ethanolamine ammonia-lyase small subunit (272 aa).

Adenosylcob(III)alamin contacts are provided by Val-161, Glu-182, and Cys-211.

This sequence belongs to the EutC family. As to quaternary structure, the basic unit is a heterodimer which dimerizes to form tetramers. The heterotetramers trimerize; 6 large subunits form a core ring with 6 small subunits projecting outwards. Adenosylcob(III)alamin is required as a cofactor.

Its subcellular location is the bacterial microcompartment. The enzyme catalyses ethanolamine = acetaldehyde + NH4(+). It functions in the pathway amine and polyamine degradation; ethanolamine degradation. Functionally, catalyzes the deamination of various vicinal amino-alcohols to oxo compounds. Allows this organism to utilize ethanolamine as the sole source of nitrogen and carbon in the presence of external vitamin B12. The polypeptide is Ethanolamine ammonia-lyase small subunit (Pseudomonas putida (strain ATCC 47054 / DSM 6125 / CFBP 8728 / NCIMB 11950 / KT2440)).